The sequence spans 519 residues: Probable FAD synthase (519 aa).

Residues 17–108 are molybdenum cofactor biosynthesis protein-like; that stretch reads AILVIGDEIL…TDQMQFSDEI (92 aa). The interval 328–485 is FAD synthase; it reads QIALSFNGGK…SLGGRDNTVK (158 aa).

In the N-terminal section; belongs to the MoaB/Mog family. This sequence in the C-terminal section; belongs to the PAPS reductase family. FAD1 subfamily. Mg(2+) is required as a cofactor.

The catalysed reaction is FMN + ATP + H(+) = FAD + diphosphate. It functions in the pathway cofactor biosynthesis; FAD biosynthesis; FAD from FMN: step 1/1. Catalyzes the adenylation of flavin mononucleotide (FMN) to form flavin adenine dinucleotide (FAD) coenzyme. The polypeptide is Probable FAD synthase (Caenorhabditis elegans).